The primary structure comprises 477 residues: ATP synthase subunit beta (477 aa).

Residue 151–158 (GGAGVGKT) participates in ATP binding.

Belongs to the ATPase alpha/beta chains family. F-type ATPases have 2 components, CF(1) - the catalytic core - and CF(0) - the membrane proton channel. CF(1) has five subunits: alpha(3), beta(3), gamma(1), delta(1), epsilon(1). CF(0) has three main subunits: a(1), b(2) and c(9-12). The alpha and beta chains form an alternating ring which encloses part of the gamma chain. CF(1) is attached to CF(0) by a central stalk formed by the gamma and epsilon chains, while a peripheral stalk is formed by the delta and b chains.

Its subcellular location is the cell inner membrane. The enzyme catalyses ATP + H2O + 4 H(+)(in) = ADP + phosphate + 5 H(+)(out). Its function is as follows. Produces ATP from ADP in the presence of a proton gradient across the membrane. The catalytic sites are hosted primarily by the beta subunits. The protein is ATP synthase subunit beta of Bradyrhizobium diazoefficiens (strain JCM 10833 / BCRC 13528 / IAM 13628 / NBRC 14792 / USDA 110).